The sequence spans 590 residues: KNR4/SMI1 homolog 2 (590 aa).

Disordered regions lie at residues 59 to 97 (SSSH…SNTN), 216 to 239 (FQHQ…ETHG), and 407 to 590 (TPQR…DVAL). Residues 71–85 (GSRTSLSRNGSSTTV) show a composition bias toward polar residues. The segment covering 217–226 (QHQQQQQQHQ) has biased composition (low complexity). The segment covering 430-454 (PSMSGATANTNKSQNPLINMESSSK) has biased composition (polar residues). 2 stretches are compositionally biased toward basic and acidic residues: residues 470 to 481 (PEEPVKKSEVKS) and 489 to 515 (EPEK…AKED). Acidic residues predominate over residues 516–528 (DKEEEEEEQEEEK). Positions 554 to 568 (TQKKNQSKKAKKQQQ) are enriched in basic residues. Positions 576 to 590 (NDVEEVAEDLNDVAL) are enriched in acidic residues.

Belongs to the KNR4/SMI1 family.

The chain is KNR4/SMI1 homolog 2 from Debaryomyces hansenii (strain ATCC 36239 / CBS 767 / BCRC 21394 / JCM 1990 / NBRC 0083 / IGC 2968) (Yeast).